The primary structure comprises 251 residues: Probable transcriptional regulatory protein cu0933 (251 aa).

The disordered stretch occupies residues 56-79; that stretch reads AKKSSVPNDNIERARKRGSGEEAG.

Belongs to the TACO1 family.

The protein resides in the cytoplasm. The sequence is that of Probable transcriptional regulatory protein cu0933 from Corynebacterium urealyticum (strain ATCC 43042 / DSM 7109).